Reading from the N-terminus, the 144-residue chain is Maximins 5/H4 type 3 (144 aa).

Positions 1–18 are cleaved as a signal peptide; the sequence is MNFKYIVAVSFLIASAYA. 2 propeptides span residues 19 to 43 and 74 to 123; these read RSVQNDEQSLSQRDVLEEESLREIR and TAED…KEKR. Leu143 carries the post-translational modification Leucine amide.

It belongs to the bombinin family. In terms of tissue distribution, expressed by the skin glands.

Its subcellular location is the secreted. Maximin-5 shows antibacterial activity against both Gram-positive and Gram-negative bacteria. The only exception is the resistance of E.coli. Also shows antimicrobial activity against fungi C.albicans, A.flavus and P.uticale. It has little hemolytic activity. It does not possess a significant cytotoxicity against tumor cell lines. It does not possess a significant anti-HIV activity. Its function is as follows. Maximin-H4 shows antibacterial activity against both Gram-positive and Gram-negative bacteria. It also shows antimicrobial activity against the fungus C.albicans. Shows strong hemolytic activity. The sequence is that of Maximins 5/H4 type 3 from Bombina maxima (Giant fire-bellied toad).